Consider the following 179-residue polypeptide: UPF0316 protein BH0621 (179 aa).

Transmembrane regions (helical) follow at residues 9–29 (ALTM…LFTV), 41–61 (LAAT…SLVL), and 67–87 (IENL…GMKV).

Belongs to the UPF0316 family.

It is found in the cell membrane. In Halalkalibacterium halodurans (strain ATCC BAA-125 / DSM 18197 / FERM 7344 / JCM 9153 / C-125) (Bacillus halodurans), this protein is UPF0316 protein BH0621.